The following is a 55-amino-acid chain: Large ribosomal subunit protein bL33 (55 aa).

This sequence belongs to the bacterial ribosomal protein bL33 family.

The chain is Large ribosomal subunit protein bL33 from Sphingopyxis alaskensis (strain DSM 13593 / LMG 18877 / RB2256) (Sphingomonas alaskensis).